A 281-amino-acid chain; its full sequence is Probable endonuclease 4 (281 aa).

Zn(2+) is bound by residues histidine 69, histidine 109, glutamate 145, aspartate 179, histidine 182, histidine 216, aspartate 229, histidine 231, and glutamate 261.

It belongs to the AP endonuclease 2 family. Zn(2+) serves as cofactor.

It catalyses the reaction Endonucleolytic cleavage to 5'-phosphooligonucleotide end-products.. Endonuclease IV plays a role in DNA repair. It cleaves phosphodiester bonds at apurinic or apyrimidinic (AP) sites, generating a 3'-hydroxyl group and a 5'-terminal sugar phosphate. In Yersinia enterocolitica serotype O:8 / biotype 1B (strain NCTC 13174 / 8081), this protein is Probable endonuclease 4.